A 309-amino-acid chain; its full sequence is 4-hydroxy-3-methylbut-2-enyl diphosphate reductase (309 aa).

C13 provides a ligand contact to [4Fe-4S] cluster. Residues H42 and H75 each coordinate (2E)-4-hydroxy-3-methylbut-2-enyl diphosphate. Positions 42 and 75 each coordinate dimethylallyl diphosphate. 2 residues coordinate isopentenyl diphosphate: H42 and H75. C97 lines the [4Fe-4S] cluster pocket. H125 is a binding site for (2E)-4-hydroxy-3-methylbut-2-enyl diphosphate. H125 provides a ligand contact to dimethylallyl diphosphate. H125 lines the isopentenyl diphosphate pocket. The Proton donor role is filled by E127. T165 is a (2E)-4-hydroxy-3-methylbut-2-enyl diphosphate binding site. C195 contacts [4Fe-4S] cluster. (2E)-4-hydroxy-3-methylbut-2-enyl diphosphate-binding residues include S223, S224, N225, and S267. The dimethylallyl diphosphate site is built by S223, S224, N225, and S267. Isopentenyl diphosphate is bound by residues S223, S224, N225, and S267.

This sequence belongs to the IspH family. Requires [4Fe-4S] cluster as cofactor.

It carries out the reaction isopentenyl diphosphate + 2 oxidized [2Fe-2S]-[ferredoxin] + H2O = (2E)-4-hydroxy-3-methylbut-2-enyl diphosphate + 2 reduced [2Fe-2S]-[ferredoxin] + 2 H(+). It catalyses the reaction dimethylallyl diphosphate + 2 oxidized [2Fe-2S]-[ferredoxin] + H2O = (2E)-4-hydroxy-3-methylbut-2-enyl diphosphate + 2 reduced [2Fe-2S]-[ferredoxin] + 2 H(+). It functions in the pathway isoprenoid biosynthesis; dimethylallyl diphosphate biosynthesis; dimethylallyl diphosphate from (2E)-4-hydroxy-3-methylbutenyl diphosphate: step 1/1. Its pathway is isoprenoid biosynthesis; isopentenyl diphosphate biosynthesis via DXP pathway; isopentenyl diphosphate from 1-deoxy-D-xylulose 5-phosphate: step 6/6. Its function is as follows. Catalyzes the conversion of 1-hydroxy-2-methyl-2-(E)-butenyl 4-diphosphate (HMBPP) into a mixture of isopentenyl diphosphate (IPP) and dimethylallyl diphosphate (DMAPP). Acts in the terminal step of the DOXP/MEP pathway for isoprenoid precursor biosynthesis. In Chlamydia felis (strain Fe/C-56) (Chlamydophila felis), this protein is 4-hydroxy-3-methylbut-2-enyl diphosphate reductase.